A 405-amino-acid chain; its full sequence is Mitochondrial outer membrane protein SLC25A46 (405 aa).

The disordered stretch occupies residues 1–77 (MTSRRPDSFE…PDEAQSAAPP (77 aa)). Over residues 22–37 (FSGGYSGRSFNNSSSS) the composition is skewed to low complexity. The Solcar 1 repeat unit spans residues 80–171 (QLNRFAGFGI…GIISECTPLP (92 aa)). Helical transmembrane passes span 87-107 (FGIG…CIVF), 151-171 (FVVQ…TPLP), 183-203 (VVGH…FYSA), 242-262 (LLPL…HYII), 302-322 (FPEL…LFPL), and 371-391 (MGFY…ATVL). The stretch at 299–401 (DAYFPELMAS…QITKMIYSTL (103 aa)) is one Solcar 2 repeat.

This sequence belongs to the mitochondrial carrier (TC 2.A.29) family.

Its subcellular location is the mitochondrion outer membrane. Transmembrane protein of the mitochondrial outer membrane that controls mitochondrial organization. May regulate the biogenesis and dynamics of mitochondrial cristae, the inwards folds of the inner mitochondrial membrane. Could regulate mitochondrial lipid homeostasis and thereby mitochondrial fission. This chain is Mitochondrial outer membrane protein SLC25A46 (slc25a46), found in Danio rerio (Zebrafish).